The chain runs to 89 residues: Small ribosomal subunit protein uS15 (89 aa).

A disordered region spans residues 1 to 24 (MSLNAETKAGIVEKYRRDPSDTGS). A compositionally biased stretch (basic and acidic residues) spans 11 to 20 (IVEKYRRDPS).

This sequence belongs to the universal ribosomal protein uS15 family. As to quaternary structure, part of the 30S ribosomal subunit. Forms a bridge to the 50S subunit in the 70S ribosome, contacting the 23S rRNA.

Functionally, one of the primary rRNA binding proteins, it binds directly to 16S rRNA where it helps nucleate assembly of the platform of the 30S subunit by binding and bridging several RNA helices of the 16S rRNA. In terms of biological role, forms an intersubunit bridge (bridge B4) with the 23S rRNA of the 50S subunit in the ribosome. This is Small ribosomal subunit protein uS15 from Thioalkalivibrio sulfidiphilus (strain HL-EbGR7).